We begin with the raw amino-acid sequence, 131 residues long: Small ribosomal subunit protein uS8 (131 aa).

Belongs to the universal ribosomal protein uS8 family. As to quaternary structure, part of the 30S ribosomal subunit. Contacts proteins S5 and S12.

In terms of biological role, one of the primary rRNA binding proteins, it binds directly to 16S rRNA central domain where it helps coordinate assembly of the platform of the 30S subunit. This chain is Small ribosomal subunit protein uS8, found in Nitrosospira multiformis (strain ATCC 25196 / NCIMB 11849 / C 71).